A 682-amino-acid polypeptide reads, in one-letter code: MLLKFEASSELRLVDPSVSLTVLRKIRLSHLPDMTMTSESSGKKCGEGDGKVAGKSQRKVGLVYDETMCKHDTPNGKVDVECPDRIRVIWEKLQLAGVTQRCVVLGGSKAEDKHLKLVHTKKHVNLVKSISTKKKDSRRNKIASQLDSIYLNGGSSEAAYLAAGSVVKVAEKVAEGELDCGFAIVRPPGHHAESDEAMGFCLFNNVAVAASFLLNERPDLDVKKILIVDWDIHHGNGTQKMFWKDSRVLIFSVHRHDHGSFYPFGDDGDFNMVGEGPGEGFNINVPWEQGGCGDADYLAVWNHILIPVTKEFKPDIILLSAGFDAAIGDPLGGCCVTPYGYSVMLKKLMEFAHGKIVLALEGGYNLESLGKSSLACVQVLLEDKQIHGSSETYPLESTRRVIQAVRERLCTYWPSLDASMASNENLKNPSAERNSADALLREVEELKSLMAARDGELEARRKELKAKNKELEANEKELEAGLMLIRAREDVICGLHAKIESLQQERDEAVAKAERIDKELQEDRARSQEFKEDTEFCLSTLRREKELAIMAKNKDLEAKEKELEARLMLVHAREDKIHAKIERLQQERDEAVAKAERIDKELQEDRSRSRVGNGSFAFSQEFYEDMDLDELEPLSPEFNEDMDSEELEPFQVIKKNMERSHKKFIKDMECIKFIASERARVL.

The segment at 59-382 is histone deacetylase; the sequence is KVGLVYDETM…SLACVQVLLE (324 aa). The active-site Proton donor/acceptor is H191. 3 residues coordinate Zn(2+): D231, H233, and D324. Residues 430 to 608 are a coiled coil; that stretch reads SAERNSADAL…DKELQEDRSR (179 aa).

It belongs to the histone deacetylase family. HD type 2 subfamily. It depends on Zn(2+) as a cofactor. As to expression, expressed in roots, stems, young rosette leaves, flowers and siliques.

The protein resides in the nucleus. The protein localises to the cytoplasm. The catalysed reaction is N(6)-acetyl-L-lysyl-[histone] + H2O = L-lysyl-[histone] + acetate. Functionally, responsible for the deacetylation of lysine residues on the N-terminal part of the core histones (H2A, H2B, H3 and H4). Histone deacetylation gives a tag for epigenetic repression and plays an important role in transcriptional regulation, cell cycle progression and developmental events. Histone deacetylases act via the formation of large multiprotein complexes. Required for appropriate cellular patterning in the root epidermis. Involved in the differentiation of hair and non-hair cells in the root epidermis. Is not directly involved in the regulation of the expression of pattern genes. Regulates the transcription of certain kinase genes, which are components of a positional information relay system, by changing their histone acetylation status. The protein is Histone deacetylase 18 of Arabidopsis thaliana (Mouse-ear cress).